Consider the following 379-residue polypeptide: MELLTTVASFFTPTTLFLLLNLMIGTIVVTSRLGSGSRKHYQHHDGFGSGHAPAPLARAPSIIDRVKSINFHLYKFPHPETELFSMTAHHDIIGSDLHVYPDPNPAPLQRAPSLLDRVKSINMSYFKFPHDVTGSDPHSHSHSHLDLHPDPAPAPLQRAPSLLDRVKSINMSYFKFQQYNPEENDYAHHTEPTRFESIPTRMGRVDPIDISKFRIPEEDQPTGTGVNSQINPPGLTRAPSILERVKSIKLSSFYRSDPDLDQKQNPDPVLHEEHKHVRSKSESKKPVKKKKKALTKMTKSASEKSGFGFAGSHAEAPETVESLERRRPDTTRVERSTSFGDGEDGVDAKASDFINKFKQQLKLQRLDSILRYKEMLKAH.

Residues 7 to 29 (VASFFTPTTLFLLLNLMIGTIVV) form a helical membrane-spanning segment. N-linked (GlcNAc...) asparagine glycosylation is present at asparagine 122. A disordered region spans residues 133–154 (TGSDPHSHSHSHLDLHPDPAPA). A compositionally biased stretch (basic and acidic residues) spans 137–149 (PHSHSHSHLDLHP). Asparagine 170 carries an N-linked (GlcNAc...) asparagine glycan. Disordered stretches follow at residues 216–238 (PEED…LTRA) and 256–347 (SDPD…DGVD). Residues 221–231 (PTGTGVNSQIN) are compositionally biased toward polar residues. Basic and acidic residues-rich tracts occupy residues 256–285 (SDPD…ESKK) and 322–335 (SLER…RVER).

Its subcellular location is the membrane. The chain is Pathogen-associated molecular patterns-induced protein A70 from Arabidopsis thaliana (Mouse-ear cress).